A 231-amino-acid polypeptide reads, in one-letter code: 2,3-bisphosphoglycerate-dependent phosphoglycerate mutase (231 aa).

Substrate-binding positions include R8 to N15, T21 to G22, R60, E87 to Y90, K98, R114 to R115, and G183 to N184. Residue H9 is the Tele-phosphohistidine intermediate of the active site. E87 acts as the Proton donor/acceptor in catalysis.

Belongs to the phosphoglycerate mutase family. BPG-dependent PGAM subfamily.

It catalyses the reaction (2R)-2-phosphoglycerate = (2R)-3-phosphoglycerate. It participates in carbohydrate degradation; glycolysis; pyruvate from D-glyceraldehyde 3-phosphate: step 3/5. In terms of biological role, catalyzes the interconversion of 2-phosphoglycerate and 3-phosphoglycerate. This chain is 2,3-bisphosphoglycerate-dependent phosphoglycerate mutase, found in Streptococcus pyogenes serotype M49 (strain NZ131).